The following is a 207-amino-acid chain: GILT-like protein 2 (207 aa).

Positions 1-19 (MRAAVFVCLLLGWVGVATP) are cleaved as a signal peptide. A disulfide bridge links C40 with C43. N-linked (GlcNAc...) asparagine glycosylation occurs at N182.

The protein belongs to the GILT family.

Its subcellular location is the secreted. Its function is as follows. Probable lysosomal thiol reductase that can reduce protein disulfide bonds. Involved in the immune response to bacterial infection. This chain is GILT-like protein 2, found in Drosophila melanogaster (Fruit fly).